The sequence spans 66 residues: EGSGGSGSSGNFTTGSNIHMSSVTNTSNAGTGTSGTGNSGGGSGGGTGPGSGAIPPVTLTESLLNK.

The segment at 1–66 (EGSGGSGSSG…VTLTESLLNK (66 aa)) is disordered. Low complexity predominate over residues 9–31 (SGNFTTGSNIHMSSVTNTSNAGT). 4 tandem repeats follow at residues 30 to 31 (GT), 32 to 33 (GT), 35 to 36 (GT), and 37 to 38 (GN). Residues 30-53 (GTGTSGTGNSGGGSGGGTGPGSGA) form a 4 X 2 AA tandem repeats of G-[TN] region. Residues 32 to 51 (GTSGTGNSGGGSGGGTGPGS) are compositionally biased toward gly residues.

In terms of assembly, forms a heterodimer with timeless (TIM); the complex then translocates into the nucleus. In terms of processing, phosphorylated with a circadian rhythmicity, probably by the double-time protein (dbt). Phosphorylation could be implicated in the stability of per monomer and in the formation of heterodimer per-tim.

The protein resides in the nucleus. It is found in the cytoplasm. It localises to the perinuclear region. Essential for biological clock functions. Determines the period length of circadian and ultradian rhythms; an increase in PER dosage leads to shortened circadian rhythms and a decrease leads to lengthened circadian rhythms. Essential for the circadian rhythmicity of locomotor activity, eclosion behavior, and for the rhythmic component of the male courtship song that originates in the thoracic nervous system. The biological cycle depends on the rhythmic formation and nuclear localization of the TIM-PER complex. Light induces the degradation of TIM, which promotes elimination of PER. Nuclear activity of the heterodimer coordinatively regulates PER and TIM transcription through a negative feedback loop. Behaves as a negative element in circadian transcriptional loop. Does not appear to bind DNA, suggesting indirect transcriptional inhibition. In Drosophila saltans (Fruit fly), this protein is Period circadian protein (per).